We begin with the raw amino-acid sequence, 256 residues long: Small ribosomal subunit protein eS1 (256 aa).

Over residues 1–18 (MAVGKNKRLSKGKKGLKK) the composition is skewed to basic residues. Positions 1 to 20 (MAVGKNKRLSKGKKGLKKRT) are disordered. Position 2 is an N-acetylalanine; partial (Ala-2).

Belongs to the eukaryotic ribosomal protein eS1 family. As to quaternary structure, component of the small ribosomal subunit. Mature ribosomes consist of a small (40S) and a large (60S) subunit. The 40S subunit contains about 33 different proteins and 1 molecule of RNA (18S). The 60S subunit contains about 49 different proteins and 3 molecules of RNA (25S, 5.8S and 5S).

The protein resides in the cytoplasm. The sequence is that of Small ribosomal subunit protein eS1 (rps1) from Talaromyces marneffei (strain ATCC 18224 / CBS 334.59 / QM 7333) (Penicillium marneffei).